Consider the following 148-residue polypeptide: Large ribosomal subunit protein bL9 (148 aa).

The protein belongs to the bacterial ribosomal protein bL9 family.

Its function is as follows. Binds to the 23S rRNA. The protein is Large ribosomal subunit protein bL9 of Staphylococcus aureus (strain bovine RF122 / ET3-1).